The primary structure comprises 95 residues: Small ribosomal subunit protein bS6 (95 aa).

It belongs to the bacterial ribosomal protein bS6 family.

Binds together with bS18 to 16S ribosomal RNA. This is Small ribosomal subunit protein bS6 from Corynebacterium efficiens (strain DSM 44549 / YS-314 / AJ 12310 / JCM 11189 / NBRC 100395).